The chain runs to 139 residues: Ribosomal RNA large subunit methyltransferase H (139 aa).

Residues Leu57, Gly88, and 107–112 (LSAMTF) contribute to the S-adenosyl-L-methionine site.

Belongs to the RNA methyltransferase RlmH family. Homodimer.

The protein localises to the cytoplasm. The enzyme catalyses pseudouridine(1915) in 23S rRNA + S-adenosyl-L-methionine = N(3)-methylpseudouridine(1915) in 23S rRNA + S-adenosyl-L-homocysteine + H(+). Its function is as follows. Specifically methylates the pseudouridine at position 1915 (m3Psi1915) in 23S rRNA. This is Ribosomal RNA large subunit methyltransferase H from Solibacter usitatus (strain Ellin6076).